We begin with the raw amino-acid sequence, 163 residues long: Ribosome maturation factor RimP (163 aa).

Belongs to the RimP family.

The protein localises to the cytoplasm. Functionally, required for maturation of 30S ribosomal subunits. This chain is Ribosome maturation factor RimP, found in Polynucleobacter asymbioticus (strain DSM 18221 / CIP 109841 / QLW-P1DMWA-1) (Polynucleobacter necessarius subsp. asymbioticus).